Consider the following 40-residue polypeptide: Photosystem II reaction center protein J (40 aa).

Residues 8–28 (IPLWLIGTVTGIPVIGLVGVF) traverse the membrane as a helical segment.

This sequence belongs to the PsbJ family. As to quaternary structure, PSII is composed of 1 copy each of membrane proteins PsbA, PsbB, PsbC, PsbD, PsbE, PsbF, PsbH, PsbI, PsbJ, PsbK, PsbL, PsbM, PsbT, PsbX, PsbY, PsbZ, Psb30/Ycf12, at least 3 peripheral proteins of the oxygen-evolving complex and a large number of cofactors. It forms dimeric complexes.

It is found in the plastid. The protein resides in the chloroplast thylakoid membrane. In terms of biological role, one of the components of the core complex of photosystem II (PSII). PSII is a light-driven water:plastoquinone oxidoreductase that uses light energy to abstract electrons from H(2)O, generating O(2) and a proton gradient subsequently used for ATP formation. It consists of a core antenna complex that captures photons, and an electron transfer chain that converts photonic excitation into a charge separation. The sequence is that of Photosystem II reaction center protein J from Lolium perenne (Perennial ryegrass).